The chain runs to 22 residues: Ocellatin-LB1 (22 aa).

Residue Met-22 is modified to Methionine amide.

In terms of tissue distribution, expressed by the skin glands.

It localises to the secreted. Antibacterial peptide that inhibits Gram-negative bacteria A.actinomycetemcomitans ATCC 29522 (MIC=222.37 uM) and E.coli ATCC 25922 (MIC=114.04 uM). Also has antifungal activity against C.albicans ATCC 18804 (MIC=233.55 uM) and C.lusitaniae ATCC 56936 (MIC=233.55 uM). No activity against the Gram-positive bacterium S.aureus ATCC 25923. Shows virtually no hemolytic activity towards rabbit erythrocytes. The chain is Ocellatin-LB1 from Leptodactylus labyrinthicus (Labyrinth frog).